A 421-amino-acid polypeptide reads, in one-letter code: Nuclear envelope integral membrane protein 2 (421 aa).

A signal peptide spans 1 to 22; the sequence is MLPRLWWLVLWLQPLATLPASA. 6 helical membrane-spanning segments follow: residues 64–84, 147–167, 175–195, 206–226, 238–258, and 281–301; these read YMWS…IVYI, NIVD…FLYA, VFYY…FVLL, TFGA…CQLM, MYIL…CYSH, and LVYT…VLLF.

The protein belongs to the NEMP family. In terms of tissue distribution, in the ovary, highly expressed in somatic cells.

It localises to the nucleus inner membrane. The protein is Nuclear envelope integral membrane protein 2 (Nemp2) of Mus musculus (Mouse).